Here is an 824-residue protein sequence, read N- to C-terminus: Protein bicaudal D homolog 2 (824 aa).

S2 is modified (N-acetylserine). A coiled-coil region spans residues E20–D269. Positions E25 to R398 are interacts with DYNLL1, DYNC1H1, DYNC1I2, DCTN1 and DCTN2. A phosphoserine mark is found at S190, S224, and S318. Residues L311–P330 are disordered. Position 319 is a phosphothreonine (T319). The interaction with KIF5A stretch occupies residues S334–D599. Residues S338–L537 are a coiled coil. A phosphoserine mark is found at S343 and S395. Disordered regions lie at residues R398–Y425, E559–R622, and E804–L824. Residues A402–G422 show a composition bias toward basic and acidic residues. S568, S574, and S582 each carry phosphoserine. The interaction with RANBP2 stretch occupies residues L590–L824. T602 carries the post-translational modification Phosphothreonine. Over residues D604 to S618 the composition is skewed to low complexity. Positions D666–R808 form a coiled coil. Positions D666–A814 are interacts with RAB6A. T821 bears the Phosphothreonine mark. S823 bears the Phosphoserine mark.

Belongs to the BicD family. In terms of assembly, part of a tripartite complex with dynein and dynactin, acts an adapter linking the dynein motor complex and dynactin. Interacts with CPNE4 (via VWFA domain). Interacts with RAB6A. Interacts with NEK9. Interacts with DNAI1. Interacts with DYNC1H1. Interacts with RANBP2. Binds preferentially to tyrosinated microtubules than to detyrosinated microtubules. Interacts with DYNLL1, DYNC1I2; DCTN1, DCTN2 and KIF5A. Interacts with KIF1C. Phosphorylated by NEK9 in vitro. Ubiquitous.

The protein localises to the golgi apparatus. The protein resides in the cytoplasm. It localises to the cytoskeleton. It is found in the nucleus envelope. Its subcellular location is the nucleus. The protein localises to the nuclear pore complex. Its function is as follows. Acts as an adapter protein linking the dynein motor complex to various cargos and converts dynein from a non-processive to a highly processive motor in the presence of dynactin. Facilitates and stabilizes the interaction between dynein and dynactin and activates dynein processivity (the ability to move along a microtubule for a long distance without falling off the track). Facilitates the binding of RAB6A to the Golgi by stabilizing its GTP-bound form. Regulates coat complex coatomer protein I (COPI)-independent Golgi-endoplasmic reticulum transport via its interaction with RAB6A and recruitment of the dynein-dynactin motor complex. Contributes to nuclear and centrosomal positioning prior to mitotic entry through regulation of both dynein and kinesin-1. During G2 phase of the cell cycle, associates with RANBP2 at the nuclear pores and recruits dynein and dynactin to the nuclear envelope to ensure proper positioning of the nucleus relative to centrosomes prior to the onset of mitosis. The protein is Protein bicaudal D homolog 2 of Homo sapiens (Human).